The following is a 531-amino-acid chain: RCC1 and BTB domain-containing protein 1 (531 aa).

RCC1 repeat units follow at residues 40–91, 93–145, 147–198, 199–250, 252–302, and 304–356; these read NDEV…LLTT, DGVV…ALAA, GELF…AVLD, SGEV…ALTD, GLLY…AAKT, and GGHV…FLTV. 2 consecutive BTB domains span residues 370-437 and 470-499; these read ADLK…DLPP and ENAF…INHL.

In terms of tissue distribution, in the retina, mainly expressed in the inner retina with strong signals reaching up to the outer plexiform layer (at protein level).

It is found in the nucleus. In terms of biological role, may be involved in cell cycle regulation by chromatin remodeling. The polypeptide is RCC1 and BTB domain-containing protein 1 (Rcbtb1) (Mus musculus (Mouse)).